Here is a 110-residue protein sequence, read N- to C-terminus: Large ribosomal subunit protein P1 (110 aa).

Blocked amino end (Ala) is present on Ala-2. Residues 69–83 (AAPAAGGAAAATEAP) show a composition bias toward low complexity. Positions 69-110 (AAPAAGGAAAATEAPAAKEEKKEEKKEESEEEDEDMGFGLFD) are disordered. Residues 84 to 96 (AAKEEKKEEKKEE) are compositionally biased toward basic and acidic residues. Residue Ser-97 is modified to Phosphoserine; in form eL12'-P.

In terms of assembly, part of the ribosomal stalk of the large ribosomal subunit; P1 and P2 exist as dimers which assemble on the P0 scaffold. In terms of processing, phosphorylation of Ser-97 converts eL12' to eL12'-P.

Plays an important role in the elongation step of protein synthesis. The protein is Large ribosomal subunit protein P1 of Artemia salina (Brine shrimp).